Here is a 593-residue protein sequence, read N- to C-terminus: MEPATAPRPDMAPELTPEEEQATKQFLEEINKWTVQYNVSPLSWNVAVKFLMARKFDVLRAVELFHCYRETRRKEGIVKLKPHEEPLRSEILSGKFTILNVRDPTGASIALFTARLHHPHKSAQHVVLQALFYLLDRAVDSFETQRNGLVFIYDMCGSNYANFELDLGKKVLNLLKGAFPARLKKVLIVGAPIWFRVPYSIISLLLKDKVRERIQILKTSEVTQHLPRECLPENLGGYVKIDLATWNFQFLPQVNGHPDPFDEIILSSLPPALDWDSVHVPGPHAMTIQELVDYVNTRQKRGIYEEYEDIRRENPVGTFHCSMSPGNLEKNRYGDVPCLDQTRVKLTKRSGHTQTDYINASFMDGYKQKNAYIGTQGPLENTYRDFWLMVWEQKVLVIVMTTRFEEGGRRKCGQYWPLEKDSRIRFGFLTVTNLGVENMNHYKKTTLEIHNTEERQKRQVTHFQFLSWPDYGVPSSAASLIDFLRVVRNQQSMAVGNLGARSKGQCPEPPIVVHCSAGIGRTGTFCSLDICLAQLEELGTLNVFQTVSRMRTQRAFSIQTPEQYYFCYKAILEFAEREGMVPSGHSLLAMDGQ.

The residue at position 1 (Met-1) is an N-acetylmethionine. The interval 1-20 is disordered; it reads MEPATAPRPDMAPELTPEEE. The region spanning 84-243 is the CRAL-TRIO domain; it reads EEPLRSEILS…NLGGYVKIDL (160 aa). The 272-residue stretch at 303 to 574 folds into the Tyrosine-protein phosphatase domain; the sequence is IYEEYEDIRR…YFCYKAILEF (272 aa). Residue Cys-515 is the Phosphocysteine intermediate of the active site.

It belongs to the protein-tyrosine phosphatase family. Non-receptor class 3 subfamily.

The protein resides in the cytoplasm. It carries out the reaction O-phospho-L-tyrosyl-[protein] + H2O = L-tyrosyl-[protein] + phosphate. In terms of biological role, protein-tyrosine phosphatase that could participate in the transfer of hydrophobic ligands or in functions of the Golgi apparatus. The chain is Tyrosine-protein phosphatase non-receptor type 9 (Ptpn9) from Mus musculus (Mouse).